Consider the following 1458-residue polypeptide: Phospholipase B1, membrane-associated (1458 aa).

An N-terminal signal peptide occupies residues Met1–Pro21. Topologically, residues Gln22 to Tyr1417 are extracellular. Repeat copies occupy residues Glu39–Ser347, Val362–Ser707, and Met708–Ser1054. The 4 X 308-326 AA approximate repeats stretch occupies residues Glu39 to Ser1402. 2 N-linked (GlcNAc...) asparagine glycosylation sites follow: Asn173 and Asn240. The active site involves Ser400. N-linked (GlcNAc...) asparagine glycosylation occurs at Asn493. Asp514 is an active-site residue. 2 N-linked (GlcNAc...) asparagine glycosylation sites follow: Asn529 and Asn590. The active site involves His655. Asn690, Asn783, Asn797, Asn809, Asn1055, Asn1113, Asn1275, and Asn1378 each carry an N-linked (GlcNAc...) asparagine glycan. Repeat 4 spans residues Ile1064–Ser1402. Residues Arg1403 to Arg1445 are necessary for membrane localization. A helical transmembrane segment spans residues Trp1418–Trp1438. At Arg1439–Leu1458 the chain is on the cytoplasmic side.

It belongs to the 'GDSL' lipolytic enzyme family. Phospholipase B1 subfamily. Undergoes proteolytic cleavage in the ileum. Expressed in the epidermis (at protein level).

It is found in the apical cell membrane. The enzyme catalyses a 1,2-diacyl-sn-glycero-3-phosphocholine + H2O = a 1-acyl-sn-glycero-3-phosphocholine + a fatty acid + H(+). It carries out the reaction a 1-O-alkyl-2-acyl-sn-glycero-3-phosphocholine + H2O = a 1-O-alkyl-sn-glycero-3-phosphocholine + a fatty acid + H(+). It catalyses the reaction a 1-acyl-sn-glycero-3-phosphocholine + H2O = sn-glycerol 3-phosphocholine + a fatty acid + H(+). The catalysed reaction is a triacylglycerol + H2O = a diacylglycerol + a fatty acid + H(+). The enzyme catalyses 1,2-dihexadecanoyl-sn-glycero-3-phosphocholine + H2O = 1-hexadecanoyl-sn-glycero-3-phosphocholine + hexadecanoate + H(+). It carries out the reaction 1-hexadecanoyl-2-(9Z-octadecenoyl)-sn-glycero-3-phosphocholine + H2O = 1-hexadecanoyl-sn-glycero-3-phosphocholine + (9Z)-octadecenoate + H(+). It catalyses the reaction 1,2-di-(9Z-octadecenoyl)-sn-glycero-3-phosphocholine + H2O = 1-(9Z-octadecenoyl)-sn-glycero-3-phosphocholine + (9Z)-octadecenoate + H(+). The catalysed reaction is 1-hexadecanoyl-2-(9Z,12Z-octadecadienoyl)-sn-glycero-3-phosphocholine + H2O = (9Z,12Z)-octadecadienoate + 1-hexadecanoyl-sn-glycero-3-phosphocholine + H(+). The enzyme catalyses 1-hexadecanoyl-2-(9Z,12Z-octadecadienoyl)-sn-glycero-3-phosphocholine + H2O = 2-(9Z,12Z-octadecadienoyl)-sn-glycero-3-phosphocholine + hexadecanoate + H(+). It carries out the reaction 1-hexadecanoyl-2-(9Z-octadecenoyl)-sn-glycero-3-phosphoethanolamine + H2O = 1-hexadecanoyl-sn-glycero-3-phosphoethanolamine + (9Z)-octadecenoate + H(+). It catalyses the reaction 1-hexadecanoyl-2-(9Z-octadecenoyl)-sn-glycero-3-phospho-(1'-sn-glycerol) + H2O = 1-hexadecanoyl-sn-glycero-3-phospho-(1'-sn-glycerol) + (9Z)-octadecenoate + H(+). The catalysed reaction is 1,2-dihexadecanoyl-sn-glycero-3-phosphocholine + 2 H2O = sn-glycerol 3-phosphocholine + 2 hexadecanoate + 2 H(+). The enzyme catalyses 1-O-hexadecyl-2-(9Z)-octadecenoyl-sn-glycero-3-phosphocholine + H2O = 1-O-hexadecyl-sn-glycero-3-phosphocholine + (9Z)-octadecenoate + H(+). It carries out the reaction 1-hexadecanoyl-sn-glycero-3-phosphocholine + H2O = sn-glycerol 3-phosphocholine + hexadecanoate + H(+). It catalyses the reaction 1,2,3-tri-(9Z-octadecenoyl)-glycerol + H2O = di-(9Z)-octadecenoylglycerol + (9Z)-octadecenoate + H(+). The catalysed reaction is 1-hexadecanoyl-2-(9Z)-octadecenoyl-3-octadecanoyl-sn-glycerol + H2O = 1-hexadecanoyl-2-(9Z-octadecenoyl)-sn-glycerol + octadecanoate + H(+). The enzyme catalyses 1,3-dihexadecanoyl-2-(9Z-octadecenoyl)glycerol + H2O = 1,3-dihexadecanoylglycerol + (9Z)-octadecenoate + H(+). It carries out the reaction 1,3-dihexadecanoyl-2-(9Z-octadecenoyl)glycerol + H2O = 1-hexadecanoyl-2-(9Z-octadecenoyl)-glycerol + hexadecanoate + H(+). It catalyses the reaction 1-hexadecanoyl-2-(9Z)-octadecenoyl-3-octadecanoyl-sn-glycerol + H2O = 1-hexadecanoyl-3-octadecanoyl-sn-glycerol + (9Z)-octadecenoate + H(+). The catalysed reaction is 1-hexadecanoyl-2-(9Z)-octadecenoyl-3-octadecanoyl-sn-glycerol + H2O = 2-(9Z-octadecenoyl)-3-octadecanoyl-sn-glycerol + hexadecanoate + H(+). The enzyme catalyses 1-octadecanoyl-2-(9Z,12Z)-octadecadienoyl-sn-glycerol + H2O = 1-octadecanoyl-sn-glycerol + (9Z,12Z)-octadecadienoate + H(+). It carries out the reaction 1,2-di-(9Z-octadecenoyl)-sn-glycerol + H2O = 1-(9Z-octadecenoyl)-sn-glycerol + (9Z)-octadecenoate + H(+). It catalyses the reaction 2,3-di-(9Z)-octadecenoyl-sn-glycerol + H2O = 3-(9Z-octadecenoyl)-sn-glycerol + (9Z)-octadecenoate + H(+). The catalysed reaction is 1,3-di-(9Z-octadecenoyl)-glycerol + H2O = 1-(9Z-octadecenoyl)-glycerol + (9Z)-octadecenoate + H(+). The enzyme catalyses 1-(9Z-octadecenoyl)-glycerol + H2O = glycerol + (9Z)-octadecenoate + H(+). It carries out the reaction 2-(9Z-octadecenoyl)-glycerol + H2O = glycerol + (9Z)-octadecenoate + H(+). Calcium-independent membrane-associated phospholipase that catalyzes complete diacylation of phospholipids by hydrolyzing both sn-1 and sn-2 fatty acyl chains attached to the glycerol backbone (phospholipase B activity). Has dual phospholipase and lysophospholipase activities toward diacylphospholipids. Preferentially cleaves sn-2 ester bonds over sn-1 bonds. Acts as a lipase toward glycerolipid substrates. Hydrolyzes fatty acyl chains of diacylglycerols with preference for the sn-2 position and of triacylglycerols with not positional selectivity. May also hydrolyze long chain retinyl esters such as retinyl palmitate. May contribute to digestion of dietary phospholipids, glycerolipids and retinoids, facilitating lipid absorption at the brush border. In Homo sapiens (Human), this protein is Phospholipase B1, membrane-associated (PLB1).